Consider the following 822-residue polypeptide: Probable RING finger protein 207 homolog (822 aa).

Residues 8 to 42 (CTICKNEFEEPILLSCQHTTCRKCSTGSPSCKSCS) form an RING-type zinc finger. The B box-type 1; atypical zinc finger occupies 68 to 115 (EEMEECANCEQISLPMFYCETCQQSLCLVCRNVTHQARMFSSHKIISS). Zn(2+) is bound by residues cysteine 73, cysteine 76, cysteine 97, and histidine 102. The B box-type 2; degenerate zinc-finger motif lies at 122 to 164 (YSSSLCKDHNEPYILYCSDVRKLVCIQCFNGRPLEERHSFISI). Coiled-coil stretches lie at residues 526–558 (NSQNRILAIEKEEENRRLNQEAKKKEELAGQSA) and 738–769 (DKDEVIEKEEIEKETEKEKKKVIRRRVKKVSE).

The protein is Probable RING finger protein 207 homolog of Caenorhabditis elegans.